A 43-amino-acid chain; its full sequence is Bacteriocin mundticin (43 aa).

Cysteine 9 and cysteine 14 are oxidised to a cystine.

Its function is as follows. This bacteriocin inhibits the growth of several Gram-positive bacteria, especially pathogenic L.monocytogenes and C.botulinum but has no effect on the growth of a number of yeasts and Gram-negative bacteria. This Enterococcus mundtii protein is Bacteriocin mundticin.